A 1077-amino-acid polypeptide reads, in one-letter code: RNA polymerase-associated protein CTR9 (1077 aa).

TPR repeat units lie at residues 56–89 (KEHWLTIALAYCNHGKTNEGIKLIEMALDVFQNS), 138–174 (IGNMLATVELYYQRGHYDKALETSDLFVKSIHAEDHR), 183–216 (CLFLLLRAKLLYQKKNYMASLKIFQELLVINPVL), 218–251 (PDPRIGIGLCFWQLKDSKMAIKSWQRALQLNPKN), 298–332 (PVLLTLLQTYYYFKGDYQTVLDIYHHRILKMSPMI), 338–371 (SESSFWCGRAHYALGDYRKSFIMFQESLKKNEDN), 373–405 (LAKLGLGQTQIKNNLLEESIITFENLYKTNESL), 421–455 (FDAKTAKNTSAKEQSNLNEKALKYLERYLKLTLAT), 462–495 (SRAYLVISQLYELQNQYKTSLDYLSKALEEMEFI), 501–534 (LEVLNNLACYHFINGDFIKADDLFKQAKAKVSDK), 540–572 (ITLEYNIARTNEKNDCEKSESIYSQVTSLHPAY), 664–697 (GKKSRNPKEQEKSKHSYLKAIQLYQKVLQVDPFN), 699–731 (FAAQGLAIIFAESKRLGPALEILRKVRDSLDNE), 732–764 (DVQLNLAHCYLEMREYGKAIENYELVLKKFDNE), 768–801 (PHILNLLGRAWYARAIKERSVNFYQKALENAKTA), and 830–863 (AETLRRSNPKFRTVQQIKDSLEGLKEGLELFREL). The segment covering 959–980 (EREAMAISEHNVKDDSDLSDKD) has biased composition (basic and acidic residues). The segment at 959-1077 (EREAMAISEH…NDNDDNDGLF (119 aa)) is disordered. A phosphoserine mark is found at S1015 and S1017. Acidic residues-rich tracts occupy residues 1042 to 1051 (FIEDSDEEEA) and 1063 to 1077 (DNDENNDNDDNDGLF).

Component of the PAF1 complex which consists of at least CDC73, CTR9, LEO1, PAF1 and RTF1. Interacts with SPT6. Interacts with FACT subunits POB3 and SPT16.

It is found in the nucleus. Its subcellular location is the nucleoplasm. Its function is as follows. The PAF1 complex is a multifunctional complex. Involved in transcription initiation via genetic interactions with TATA-binding proteins. Involved in elongation. It regulates 3'-end formation of snR47 by modulating the recruitment or stable association of NRD1 and NAB3 with RNA polymerase II. Also has a role in transcription-coupled histone modification. Required for activation of RAD6 ubiquitin conjugate and the BRE1 ubiquitin ligase which ubiquitinate 'Lys-126' histone H2B. Activates the SET1 histone methyltransferase complex for methylation of 'Lys-4' of histone H3 and for methylation of 'Lys-73' of histone H3 by DOT1 and 'Lys-36' of histone H3 by SET2. In complex with PAF1, required for normal CLN1 and CLN2 G1 cyclin expression in late G1. Also has a role in chromosome segregation where it appears to be involved in microtubule placement. This Saccharomyces cerevisiae (strain ATCC 204508 / S288c) (Baker's yeast) protein is RNA polymerase-associated protein CTR9 (CTR9).